The following is a 163-amino-acid chain: Secreted RxLR effector protein 135 (163 aa).

The N-terminal stretch at 1-20 is a signal peptide; sequence MRRLYLFVLILATFLTTSHG. The short motif at 33–45 is the RxLR-dEER element; sequence RGLQEEAGEDEER. A disordered region spans residues 94-127; sequence KNAGKPKRQTPQIAATGPAKPKVQSPEEAAAVPG.

This sequence belongs to the RxLR effector family.

The protein localises to the secreted. Its subcellular location is the host nucleus. It localises to the host cytoplasm. Functionally, secreted effector that completely suppresses the host cell death induced by cell death-inducing proteins. The chain is Secreted RxLR effector protein 135 from Plasmopara viticola (Downy mildew of grapevine).